The chain runs to 235 residues: Transcriptional regulatory protein WalR (235 aa).

Residues 4–117 enclose the Response regulatory domain; sequence KILVVDDEKP…ELLARVKANL (114 aa). D53 is subject to 4-aspartylphosphate. The segment at residues 132 to 231 is a DNA-binding region (ompR/PhoB-type); the sequence is SNEIHIGSLV…RRGVGYYLRN (100 aa).

As to quaternary structure, homodimer. In terms of processing, phosphorylated by WalK.

The protein resides in the cytoplasm. In terms of biological role, member of the two-component regulatory system WalK/WalR involved in the regulation of the ftsAZ operon, the yocH, ykvT, cwlO, lytE, ydjM, yjeA, yoeB genes and the tagAB and tagDEF operons. Binds to the ftsAZ P1 promoter sequence in vitro. WalR has been shown to directly bind to the regulatory regions of yocH, ykvT, tagAB/tagDEF. Activates cwlO, lytE and ydjM and represses yoeB and yjeA. In Bacillus subtilis (strain 168), this protein is Transcriptional regulatory protein WalR.